The primary structure comprises 125 residues: Large ribosomal subunit protein bL12 (125 aa).

This sequence belongs to the bacterial ribosomal protein bL12 family. Homodimer. Part of the ribosomal stalk of the 50S ribosomal subunit. Forms a multimeric L10(L12)X complex, where L10 forms an elongated spine to which 2 to 4 L12 dimers bind in a sequential fashion. Binds GTP-bound translation factors.

Forms part of the ribosomal stalk which helps the ribosome interact with GTP-bound translation factors. Is thus essential for accurate translation. This Gluconobacter oxydans (strain 621H) (Gluconobacter suboxydans) protein is Large ribosomal subunit protein bL12.